Consider the following 370-residue polypeptide: Probable neutral protease 2 homolog ARB_03949 (370 aa).

The signal sequence occupies residues 1–19; the sequence is MQLVAALAALGALVAPAVA. Residues 20–188 constitute a propeptide that is removed on maturation; the sequence is YPHAPMNETL…SIHSRALQKR (169 aa). 2 cysteine pairs are disulfide-bonded: Cys196/Cys267 and Cys274/Cys292. His316 contributes to the Zn(2+) binding site. Residue Glu317 is part of the active site. Positions 320 and 331 each coordinate Zn(2+).

Belongs to the peptidase M35 family. It depends on Zn(2+) as a cofactor.

Its subcellular location is the secreted. It catalyses the reaction Preferential cleavage of bonds with hydrophobic residues in P1'. Also 3-Asn-|-Gln-4 and 8-Gly-|-Ser-9 bonds in insulin B chain.. Functionally, probable secreted metalloprotease that shows high activities on basic nuclear substrates such as histone and protamine. May be involved in virulence. This chain is Probable neutral protease 2 homolog ARB_03949, found in Arthroderma benhamiae (strain ATCC MYA-4681 / CBS 112371) (Trichophyton mentagrophytes).